Reading from the N-terminus, the 529-residue chain is Peptide chain release factor 3 (529 aa).

Residues 11-280 (NKRRTFAIIS…GLTQWAPAPQ (270 aa)) form the tr-type G domain. GTP-binding positions include 20–27 (SHPDAGKT), 88–92 (DTPGH), and 142–145 (NKLD).

It belongs to the TRAFAC class translation factor GTPase superfamily. Classic translation factor GTPase family. PrfC subfamily.

It localises to the cytoplasm. Increases the formation of ribosomal termination complexes and stimulates activities of RF-1 and RF-2. It binds guanine nucleotides and has strong preference for UGA stop codons. It may interact directly with the ribosome. The stimulation of RF-1 and RF-2 is significantly reduced by GTP and GDP, but not by GMP. The protein is Peptide chain release factor 3 (prfC) of Pasteurella multocida (strain Pm70).